We begin with the raw amino-acid sequence, 406 residues long: Ubiquitin-like modifier-activating enzyme 5 (406 aa).

5 residues coordinate ATP: Gly-82, Asp-103, Lys-126, Asn-149, and Asn-183. Zn(2+)-binding residues include Cys-225 and Cys-228. Cys-249 (glycyl thioester intermediate) is an active-site residue. Zn(2+) contacts are provided by Cys-302 and Cys-307. The segment at 373–397 (EAPSKSTETTSEATTTTTGDETSLD) is disordered. Low complexity predominate over residues 378-393 (STETTSEATTTTTGDE).

The protein belongs to the ubiquitin-activating E1 family. UBA5 subfamily.

Functionally, E1-like enzyme which activates UFM1. In Drosophila willistoni (Fruit fly), this protein is Ubiquitin-like modifier-activating enzyme 5.